The following is a 431-amino-acid chain: MRGLEKQGSCATAAPCGCVQPALEAGNLLTEPIGYLESCFPAKIGTPRQPSICSHSRACLKIRKNIFNNPEHSLMGLEEFSHVWILFVFHKNGHLNYKAKVQPPRLNGAKTGVFSTRSPHRPNAIGLTLAKLEKVEGGAVYLSGVDMIDGTPVLDIKPYIADYDSPQNLSVHNDHHKLRAEAQVDGTANSCDQLLLSGRGKVQPRQSTKERPKCLEDRTSGENSQKSRDMSEIQHTLPEDRERALDLALEPSRGESMDMPENQLGPPELKSFLEEGTDRPRKVEGALVLPGSSAETQWDASYRARTADRVPYSVVPSWVTEAPVAPLQVRFTPHAEMDLRKLNSGDASQPSFKYFHSAEEAKRAIEAVLSADPRSVYRRKLCEDRLFFFTVDTAHVTCWFGDGFAEVVRIKLASESVQVADPEESLAALGS.

The 139-residue stretch at 30–168 (TEPIGYLESC…YIADYDSPQN (139 aa)) folds into the TsaA-like domain. Residues 47-49 (PRQ), 90-91 (HK), arginine 117, leucine 127, and 148-151 (IDGT) contribute to the S-adenosyl-L-methionine site. A disordered region spans residues 196-242 (LSGRGKVQPRQSTKERPKCLEDRTSGENSQKSRDMSEIQHTLPEDRE). The segment covering 207–242 (STKERPKCLEDRTSGENSQKSRDMSEIQHTLPEDRE) has biased composition (basic and acidic residues).

This sequence belongs to the tRNA methyltransferase O family.

The catalysed reaction is N(6)-L-threonylcarbamoyladenosine(37) in tRNA + S-adenosyl-L-methionine = N(6)-methyl,N(6)-L-threonylcarbamoyladenosine(37) in tRNA + S-adenosyl-L-homocysteine + H(+). Its function is as follows. S-adenosyl-L-methionine-dependent methyltransferase responsible for the addition of the methyl group in the formation of N6-methyl-N6-threonylcarbamoyladenosine at position 37 (m(6)t(6)A37) of the tRNA anticodon loop of tRNA(Ser)(GCU). The methyl group of m(6)t(6)A37 may improve the efficiency of the tRNA decoding ability. May bind to tRNA. The sequence is that of tRNA (adenine(37)-N6)-methyltransferase from Mus musculus (Mouse).